We begin with the raw amino-acid sequence, 99 residues long: Osteocalcin (99 aa).

A signal peptide spans Met1–Ala23. A propeptide spanning residues Lys24–Arg49 is cleaved from the precursor. The 47-residue stretch at Tyr50–Gly96 folds into the Gla domain. Pro58 carries the post-translational modification Hydroxyproline. Ca(2+)-binding residues include Glu66, Glu70, Glu73, and Asp79. 4-carboxyglutamate is present on residues Glu66, Glu70, and Glu73. Cys72 and Cys78 are disulfide-bonded.

Belongs to the osteocalcin/matrix Gla protein family. Gamma-carboxyglutamate residues are formed by vitamin K dependent carboxylation by GGCX. These residues are essential for the binding of calcium. Decarboxylation promotes the hormone activity.

It localises to the secreted. Functionally, the carboxylated form is one of the main organic components of the bone matrix, which constitutes 1-2% of the total bone protein: it acts as a negative regulator of bone formation and is required to limit bone formation without impairing bone resorption or mineralization. The carboxylated form binds strongly to apatite and calcium. Its function is as follows. The uncarboxylated form acts as a hormone secreted by osteoblasts, which regulates different cellular processes, such as energy metabolism, male fertility and brain development. Regulates of energy metabolism by acting as a hormone favoring pancreatic beta-cell proliferation, insulin secretion and sensitivity and energy expenditure. Uncarboxylated osteocalcin hormone also promotes testosterone production in the testes: acts as a ligand for G protein-coupled receptor GPRC6A at the surface of Leydig cells, initiating a signaling response that promotes the expression of enzymes required for testosterone synthesis in a CREB-dependent manner. Also acts as a regulator of brain development: osteocalcin hormone crosses the blood-brain barrier and acts as a ligand for GPR158 on neurons, initiating a signaling response that prevents neuronal apoptosis in the hippocampus, favors the synthesis of all monoamine neurotransmitters and inhibits that of gamma-aminobutyric acid (GABA). Osteocalcin also crosses the placenta during pregnancy and maternal osteocalcin is required for fetal brain development. The chain is Osteocalcin (Bglap) from Rattus norvegicus (Rat).